We begin with the raw amino-acid sequence, 199 residues long: Thymidylate kinase (199 aa).

7-14 contacts ATP; sequence GTEGVGKT.

This sequence belongs to the thymidylate kinase family.

It carries out the reaction dTMP + ATP = dTDP + ADP. Phosphorylation of dTMP to form dTDP in both de novo and salvage pathways of dTTP synthesis. This chain is Thymidylate kinase, found in Acinetobacter baumannii (strain AB307-0294).